A 166-amino-acid chain; its full sequence is Phospholipase A2 inhibitor A4/A5 (166 aa).

The N-terminal stretch at M1–G19 is a signal peptide. In terms of domain architecture, C-type lectin spans L46–E161. 2 disulfide bridges follow: C83–C160 and C138–C152. N122 carries N-linked (GlcNAc...) asparagine glycosylation.

Belongs to the alpha-type phospholipase A2 inhibitor family. As to quaternary structure, homotrimer; non-covalently linked. Expressed by the liver.

The protein resides in the secreted. In terms of biological role, this phospholipase A2 inhibitor binds directly phospholipase A2 in the presence or absence of calcium. This chain is Phospholipase A2 inhibitor A4/A5, found in Crotalus durissus terrificus (South American rattlesnake).